We begin with the raw amino-acid sequence, 296 residues long: Cytidine deaminase (296 aa).

2 CMP/dCMP-type deaminase domains span residues 48 to 168 (DADA…FGPV) and 187 to 296 (QNMN…FIEE). Residue 89-91 (NME) participates in substrate binding. His-102 contributes to the Zn(2+) binding site. Glu-104 functions as the Proton donor in the catalytic mechanism. Residues Cys-129 and Cys-132 each coordinate Zn(2+).

It belongs to the cytidine and deoxycytidylate deaminase family. Homodimer. It depends on Zn(2+) as a cofactor.

The catalysed reaction is cytidine + H2O + H(+) = uridine + NH4(+). It carries out the reaction 2'-deoxycytidine + H2O + H(+) = 2'-deoxyuridine + NH4(+). Its function is as follows. This enzyme scavenges exogenous and endogenous cytidine and 2'-deoxycytidine for UMP synthesis. The protein is Cytidine deaminase of Pectobacterium carotovorum subsp. carotovorum (strain PC1).